The chain runs to 481 residues: MAVANQPRTLAEKVWSDHVVVSGSGEGAAREPDLIYIDLHLVHEVTSPQAFDGLRLAGRPVRRPDLTIATEDHNVPTVDIDKPIADPVSRTQVETLRRNCEEFGIRLHPMGDVEQGIVHIIGPQLGLTQPGTTVVCGDSHTSTHGAFGALAMGIGTSEVEHVLATQTLPLRPFKTMAVNVDGELPPGVSAKDVILAVIAKIGTGGGQGHVIEYRGSAIESLSMEGRMTICNMSIEAGARAGMIAPDETTFEFLKGRPHAPQGADWDAAVEAWKLLRTDEGAQFDTEVYIDAASLSPFVTWGTNPGQGVPLSDSVPDPEMIFDEGERSAVEKALAYMDLRPGTPMREIPVDAVFVGSCTNGRIEDLRVVADVLRGRTVADDVRMLVVPGSMRVRAQAEAEGLGEIFTAAGAEWRQAGCSMCLGMNPDQLAPGERCASTSNRNFEGRQGKGGRTHLVSPAVAAATAVRGTLSSPADLTAEPTR.

[4Fe-4S] cluster is bound by residues Cys-357, Cys-417, and Cys-420.

This sequence belongs to the aconitase/IPM isomerase family. LeuC type 1 subfamily. In terms of assembly, heterodimer of LeuC and LeuD. [4Fe-4S] cluster is required as a cofactor.

The enzyme catalyses (2R,3S)-3-isopropylmalate = (2S)-2-isopropylmalate. It functions in the pathway amino-acid biosynthesis; L-leucine biosynthesis; L-leucine from 3-methyl-2-oxobutanoate: step 2/4. Its function is as follows. Catalyzes the isomerization between 2-isopropylmalate and 3-isopropylmalate, via the formation of 2-isopropylmaleate. This is 3-isopropylmalate dehydratase large subunit from Mycolicibacterium gilvum (strain PYR-GCK) (Mycobacterium gilvum (strain PYR-GCK)).